A 57-amino-acid polypeptide reads, in one-letter code: DNA gyrase inhibitor YacG (57 aa).

Cys-10, Cys-13, Cys-25, and Cys-29 together coordinate Zn(2+).

The protein belongs to the DNA gyrase inhibitor YacG family. As to quaternary structure, interacts with GyrB. Zn(2+) serves as cofactor.

In terms of biological role, inhibits all the catalytic activities of DNA gyrase by preventing its interaction with DNA. Acts by binding directly to the C-terminal domain of GyrB, which probably disrupts DNA binding by the gyrase. This Brucella abortus (strain 2308) protein is DNA gyrase inhibitor YacG.